We begin with the raw amino-acid sequence, 479 residues long: Glutamate--tRNA ligase (479 aa).

The short motif at 9–19 (PSPTGNLHIGT) is the 'HIGH' region element. Residues 243 to 247 (KLSKR) carry the 'KMSKS' region motif. Lys246 serves as a coordination point for ATP.

The protein belongs to the class-I aminoacyl-tRNA synthetase family. Glutamate--tRNA ligase type 1 subfamily. Monomer.

It is found in the cytoplasm. The enzyme catalyses tRNA(Glu) + L-glutamate + ATP = L-glutamyl-tRNA(Glu) + AMP + diphosphate. Catalyzes the attachment of glutamate to tRNA(Glu) in a two-step reaction: glutamate is first activated by ATP to form Glu-AMP and then transferred to the acceptor end of tRNA(Glu). The polypeptide is Glutamate--tRNA ligase (Synechococcus sp. (strain JA-3-3Ab) (Cyanobacteria bacterium Yellowstone A-Prime)).